Here is a 405-residue protein sequence, read N- to C-terminus: Argininosuccinate synthase (405 aa).

ATP is bound by residues 11–19 and A38; that span reads AYSGGLDTS. Positions 91 and 96 each coordinate L-citrulline. G121 is an ATP binding site. L-aspartate contacts are provided by T123, N127, and D128. N127 provides a ligand contact to L-citrulline. L-citrulline is bound by residues R131, S182, S191, E267, and Y279.

This sequence belongs to the argininosuccinate synthase family. Type 1 subfamily. In terms of assembly, homotetramer.

It localises to the cytoplasm. It carries out the reaction L-citrulline + L-aspartate + ATP = 2-(N(omega)-L-arginino)succinate + AMP + diphosphate + H(+). The protein operates within amino-acid biosynthesis; L-arginine biosynthesis; L-arginine from L-ornithine and carbamoyl phosphate: step 2/3. In Sphingopyxis alaskensis (strain DSM 13593 / LMG 18877 / RB2256) (Sphingomonas alaskensis), this protein is Argininosuccinate synthase.